The primary structure comprises 216 residues: Dephospho-CoA kinase (216 aa).

In terms of domain architecture, DPCK spans Ile18–Lys216. Cys26–Thr31 contacts ATP.

The protein belongs to the CoaE family.

Its subcellular location is the cytoplasm. It catalyses the reaction 3'-dephospho-CoA + ATP = ADP + CoA + H(+). The protein operates within cofactor biosynthesis; coenzyme A biosynthesis; CoA from (R)-pantothenate: step 5/5. Functionally, catalyzes the phosphorylation of the 3'-hydroxyl group of dephosphocoenzyme A to form coenzyme A. This chain is Dephospho-CoA kinase, found in Rhodopirellula baltica (strain DSM 10527 / NCIMB 13988 / SH1).